The chain runs to 180 residues: Shikimate kinase (180 aa).

15 to 20 serves as a coordination point for ATP; sequence GAGKTT. Threonine 19 is a binding site for Mg(2+). Aspartate 37, arginine 61, and glycine 83 together coordinate substrate. Arginine 121 contacts ATP. Arginine 140 is a binding site for substrate.

It belongs to the shikimate kinase family. As to quaternary structure, monomer. Mg(2+) is required as a cofactor.

It localises to the cytoplasm. The catalysed reaction is shikimate + ATP = 3-phosphoshikimate + ADP + H(+). Its pathway is metabolic intermediate biosynthesis; chorismate biosynthesis; chorismate from D-erythrose 4-phosphate and phosphoenolpyruvate: step 5/7. In terms of biological role, catalyzes the specific phosphorylation of the 3-hydroxyl group of shikimic acid using ATP as a cosubstrate. This Psychrobacter sp. (strain PRwf-1) protein is Shikimate kinase.